The sequence spans 1136 residues: Myosin-binding protein C, fast-type (1136 aa).

Disordered regions lie at residues 1 to 55 and 151 to 177; these read MPEA…KKPD and APRQ…DAGE. Residues 13–35 show a composition bias toward basic and acidic residues; sequence KGKDAPKEAPAKQTPEEPPKEAP. The Ig-like C2-type 1 domain occupies 46–149; it reads PTGIFLKKPD…CDSCSFNVDV (104 aa). Basic and acidic residues predominate over residues 163 to 174; that stretch reads SFKRSGDGKSED. Ig-like C2-type domains lie at 250–339, 340–432, 433–533, and 534–633; these read SAAF…VKEP, PVLI…VEEK, QLEV…KQEP, and PKIH…VVDV. Fibronectin type-III domains lie at 636 to 732 and 734 to 829; these read PPEA…IAPT and APQH…IREI. Positions 833–927 constitute an Ig-like C2-type 6 domain; the sequence is PKIRLPRHLR…ATIRIRVVEK (95 aa). In terms of domain architecture, Fibronectin type-III 3 spans 930–1025; sequence PAENVMVKEV…SKNTARILKT (96 aa). In terms of domain architecture, Ig-like C2-type 7 spans 1043–1136; sequence PKFLTPLMDR…ECKLDVRVPQ (94 aa).

The protein belongs to the immunoglobulin superfamily. MyBP family.

Its function is as follows. Thick filament-associated protein located in the crossbridge region of vertebrate striated muscle a bands. In vitro it binds MHC, F-actin and native thin filaments, and modifies the activity of actin-activated myosin ATPase. It may modulate muscle contraction or may play a more structural role. In Mus musculus (Mouse), this protein is Myosin-binding protein C, fast-type (Mybpc2).